Reading from the N-terminus, the 312-residue chain is Aspartate carbamoyltransferase catalytic subunit (312 aa).

The carbamoyl phosphate site is built by Arg-55 and Thr-56. Residue Lys-83 coordinates L-aspartate. Carbamoyl phosphate contacts are provided by Arg-105, His-138, and Gln-141. Arg-171 and Arg-225 together coordinate L-aspartate. Residues Gly-266 and Pro-267 each coordinate carbamoyl phosphate.

Belongs to the aspartate/ornithine carbamoyltransferase superfamily. ATCase family. Heterododecamer (2C3:3R2) of six catalytic PyrB chains organized as two trimers (C3), and six regulatory PyrI chains organized as three dimers (R2).

It carries out the reaction carbamoyl phosphate + L-aspartate = N-carbamoyl-L-aspartate + phosphate + H(+). It participates in pyrimidine metabolism; UMP biosynthesis via de novo pathway; (S)-dihydroorotate from bicarbonate: step 2/3. Catalyzes the condensation of carbamoyl phosphate and aspartate to form carbamoyl aspartate and inorganic phosphate, the committed step in the de novo pyrimidine nucleotide biosynthesis pathway. The sequence is that of Aspartate carbamoyltransferase catalytic subunit from Corynebacterium glutamicum (strain ATCC 13032 / DSM 20300 / JCM 1318 / BCRC 11384 / CCUG 27702 / LMG 3730 / NBRC 12168 / NCIMB 10025 / NRRL B-2784 / 534).